A 175-amino-acid chain; its full sequence is Inorganic pyrophosphatase (175 aa).

3 residues coordinate substrate: Lys30, Arg44, and Tyr56. Mg(2+) contacts are provided by Asp66, Asp71, and Asp103. Position 142 (Tyr142) interacts with substrate.

This sequence belongs to the PPase family. In terms of assembly, homohexamer. The cofactor is Mg(2+).

Its subcellular location is the cytoplasm. It catalyses the reaction diphosphate + H2O = 2 phosphate + H(+). Its function is as follows. Catalyzes the hydrolysis of inorganic pyrophosphate (PPi) forming two phosphate ions. The sequence is that of Inorganic pyrophosphatase from Pseudomonas aeruginosa (strain ATCC 15692 / DSM 22644 / CIP 104116 / JCM 14847 / LMG 12228 / 1C / PRS 101 / PAO1).